Consider the following 273-residue polypeptide: Acetyl-coenzyme A carboxylase carboxyl transferase subunit alpha (273 aa).

The CoA carboxyltransferase C-terminal domain maps to 1–244; sequence MKKATQSKAW…KVVLKQALDE (244 aa).

It belongs to the AccA family. As to quaternary structure, acetyl-CoA carboxylase is a heterohexamer composed of biotin carboxyl carrier protein (AccB), biotin carboxylase (AccC) and two subunits each of ACCase subunit alpha (AccA) and ACCase subunit beta (AccD).

It localises to the cytoplasm. The enzyme catalyses N(6)-carboxybiotinyl-L-lysyl-[protein] + acetyl-CoA = N(6)-biotinyl-L-lysyl-[protein] + malonyl-CoA. It functions in the pathway lipid metabolism; malonyl-CoA biosynthesis; malonyl-CoA from acetyl-CoA: step 1/1. Its function is as follows. Component of the acetyl coenzyme A carboxylase (ACC) complex. First, biotin carboxylase catalyzes the carboxylation of biotin on its carrier protein (BCCP) and then the CO(2) group is transferred by the carboxyltransferase to acetyl-CoA to form malonyl-CoA. This is Acetyl-coenzyme A carboxylase carboxyl transferase subunit alpha from Acinetobacter baumannii (strain AB0057).